A 476-amino-acid chain; its full sequence is tRNA-2-methylthio-N(6)-dimethylallyladenosine synthase (476 aa).

Residues 5-122 (KKLYIKTWGC…LPEMINQVKG (118 aa)) enclose the MTTase N-terminal domain. 6 residues coordinate [4Fe-4S] cluster: C14, C51, C85, C159, C163, and C166. The region spanning 145 to 377 (RAEGPSAFVS…QQRINQQAMS (233 aa)) is the Radical SAM core domain. A TRAM domain is found at 380–443 (RAMLGSVQRI…ANSLRGKVIR (64 aa)).

This sequence belongs to the methylthiotransferase family. MiaB subfamily. Monomer. The cofactor is [4Fe-4S] cluster.

The protein localises to the cytoplasm. The catalysed reaction is N(6)-dimethylallyladenosine(37) in tRNA + (sulfur carrier)-SH + AH2 + 2 S-adenosyl-L-methionine = 2-methylsulfanyl-N(6)-dimethylallyladenosine(37) in tRNA + (sulfur carrier)-H + 5'-deoxyadenosine + L-methionine + A + S-adenosyl-L-homocysteine + 2 H(+). Functionally, catalyzes the methylthiolation of N6-(dimethylallyl)adenosine (i(6)A), leading to the formation of 2-methylthio-N6-(dimethylallyl)adenosine (ms(2)i(6)A) at position 37 in tRNAs that read codons beginning with uridine. The chain is tRNA-2-methylthio-N(6)-dimethylallyladenosine synthase from Photorhabdus laumondii subsp. laumondii (strain DSM 15139 / CIP 105565 / TT01) (Photorhabdus luminescens subsp. laumondii).